The primary structure comprises 153 residues: MARTGYSATIEGENVARAKANELPVSPKHSIEIARFIKNMTTTEAKAYLTDVVALKKAIPFKRFNRNVAHKRGLSKWPAGRYPVKAAEAYIRLLESVEKNAEYIGLDVENLRIDHAAANTGRGLRAFFPRAMGRATPKRRETVNIEIVVTEVA.

This sequence belongs to the universal ribosomal protein uL22 family. In terms of assembly, part of the 50S ribosomal subunit.

In terms of biological role, this protein binds specifically to 23S rRNA. It makes multiple contacts with different domains of the 23S rRNA in the assembled 50S subunit and ribosome. The globular domain of the protein is located near the polypeptide exit tunnel on the outside of the subunit, while an extended beta-hairpin is found that lines the wall of the exit tunnel in the center of the 70S ribosome. In Methanoculleus marisnigri (strain ATCC 35101 / DSM 1498 / JR1), this protein is Large ribosomal subunit protein uL22.